A 142-amino-acid polypeptide reads, in one-letter code: MAKKVVGYIKLQVKAGQANPSPPVGPALGQRGLNIMEFCKAFNAATQKLEPGLPVPVIITAYSDRTFTFITKSTPATTLLKKAAGISSGSKRPNTEKVGKVTRKQLEEIAKAKEPDLTAADLDAAVRTIAGSARSMGLVVEG.

Belongs to the universal ribosomal protein uL11 family. Part of the ribosomal stalk of the 50S ribosomal subunit. Interacts with L10 and the large rRNA to form the base of the stalk. L10 forms an elongated spine to which L12 dimers bind in a sequential fashion forming a multimeric L10(L12)X complex. One or more lysine residues are methylated.

Functionally, forms part of the ribosomal stalk which helps the ribosome interact with GTP-bound translation factors. In Stenotrophomonas maltophilia (strain R551-3), this protein is Large ribosomal subunit protein uL11.